The primary structure comprises 353 residues: Ubiquinol oxidase 1, mitochondrial (353 aa).

The transit peptide at 1–69 (MMTRGATRMT…RHFPVMGSRS (69 aa)) directs the protein to the mitochondrion. The disordered stretch occupies residues 77 to 99 (DKQHDKKAENGSAAATGGGDGGD). Residues 178–198 (AMMLETVAAVPGMVGGMLLHC) form a helical membrane-spanning segment. 3 residues coordinate Fe cation: E182, E221, and H224. Residues 240-260 (ALVFAVQGVFFNAYFVTYLLS) form a helical membrane-spanning segment. Fe cation contacts are provided by E272, E323, and H326.

This sequence belongs to the alternative oxidase family. Homodimer; disulfide-linked. It depends on Fe cation as a cofactor.

The protein resides in the mitochondrion inner membrane. It catalyses the reaction 2 a ubiquinol + O2 = 2 a ubiquinone + 2 H2O. Its activity is regulated as follows. Stimulated by reduction of the disulfide bond and the presence of pyruvate. Catalyzes the cyanide-resistant oxidation of ubiquinol and the reduction of molecular oxygen to water, but does not translocate protons and consequently is not linked to oxidative phosphorylation. May increase respiration when the cytochrome respiratory pathway is restricted, or in response to low temperatures. This chain is Ubiquinol oxidase 1, mitochondrial (AOX1), found in Nicotiana tabacum (Common tobacco).